Reading from the N-terminus, the 224-residue chain is MINQKKIAGEKACEWIKDGMVVGLGTGSTVYYTIEKLGEMVNNGLHITGVATSEETSKQAQNLGIPLKSLNDVAEIDITIDGADEIDTDFQGIKGGGGALLREKMVASASLKNIWVVSEEKLVRNLGKFPLPIEVIPFGWKQIERTLEKEHIQTILRRQSSGEIYVTNNGNYILDIVNQTFRDAEMWQEKLAQIPGIVEHGLFLHYVDIIVCAKANGEIELIKK.

Substrate contacts are provided by residues 26–29, 81–84, and 94–97; these read TGST, DGAD, and KGGG. E103 functions as the Proton acceptor in the catalytic mechanism. K121 contributes to the substrate binding site.

This sequence belongs to the ribose 5-phosphate isomerase family. As to quaternary structure, homodimer.

The catalysed reaction is aldehydo-D-ribose 5-phosphate = D-ribulose 5-phosphate. The protein operates within carbohydrate degradation; pentose phosphate pathway; D-ribose 5-phosphate from D-ribulose 5-phosphate (non-oxidative stage): step 1/1. Functionally, catalyzes the reversible conversion of ribose-5-phosphate to ribulose 5-phosphate. This chain is Ribose-5-phosphate isomerase A, found in Listeria monocytogenes serotype 4b (strain F2365).